A 304-amino-acid polypeptide reads, in one-letter code: MTVKEYTKSKLPCSILNIKPTVTKSGEDAPLLVWIPGNPGLLYYYQEMLHHLHLKHPDWEILGISHAGMTLNAHSNTPIFSLQDQVDHQVEVINNFSCKNRKIIIMGHSVGAYIVQKVCLSNKLVGSVQKVGLVTPTVMDIHTSEMGIKMTAALRYIPPLAHVVSLFSYIFFYWILSEGFSRFIIDKFMGCGSTGYQAVLSTRIFLTHRQFVRQSLGLAAQEMEEITTNWEFQDRFINYCEENGISIWFLFSSNDHWVSGKTRSHLSDYYKDKVKQERLKIDVTDKIPHSFVVKHAEYAINAFF.

Topologically, residues 1 to 155 (MTVKEYTKSK…MGIKMTAALR (155 aa)) are lumenal. N95 carries N-linked (GlcNAc...) asparagine glycosylation. Positions 107–111 (GHSVG) match the GXSXG motif. S109 (nucleophile) is an active-site residue. An intramembrane segment occupies 156–176 (YIPPLAHVVSLFSYIFFYWIL). The Lumenal segment spans residues 177–304 (SEGFSRFIID…HAEYAINAFF (128 aa)).

The protein belongs to the AB hydrolase superfamily. LDAH family.

The protein resides in the lipid droplet. The protein localises to the membrane. The catalysed reaction is a triacylglycerol + H2O = a diacylglycerol + a fatty acid + H(+). Functionally, shows both triacylglycerol (TAG) lipase and ester hydrolase activities. May play a role in TAG homeostasis. The chain is Lipid droplet-associated triacylglycerol lipase from Saccharomyces cerevisiae (strain ATCC 204508 / S288c) (Baker's yeast).